Consider the following 1037-residue polypeptide: Glycine dehydrogenase (decarboxylating) 1, mitochondrial (1037 aa).

The transit peptide at 1 to 67 (MERARRLAYR…AFGRHQQTRS (67 aa)) directs the protein to the mitochondrion. The residue at position 98 (Cys98) is an S-glutathionyl cysteine; transient. 2 positions are modified to S-glutathionyl cysteine: Cys402 and Cys463. Position 774 is an N6-(pyridoxal phosphate)lysine (Lys774). An S-glutathionyl cysteine; transient mark is found at Cys777, Cys943, and Cys1022.

It belongs to the GcvP family. In terms of assembly, homodimer. The glycine cleavage system is composed of four proteins: P, T, L and H. Requires pyridoxal 5'-phosphate as cofactor. Post-translationally, glutathionylated at Cys-98, Cys-777, Cys-943 and Cys-1022 after S-nitrosoglutathione treatment. In terms of processing, S-nitrosylated at unknown positions by nitric oxide. As to expression, expressed in leaves. Detected in roots, stems, flowers and siliques.

It localises to the mitochondrion. The catalysed reaction is N(6)-[(R)-lipoyl]-L-lysyl-[glycine-cleavage complex H protein] + glycine + H(+) = N(6)-[(R)-S(8)-aminomethyldihydrolipoyl]-L-lysyl-[glycine-cleavage complex H protein] + CO2. Its activity is regulated as follows. Inhibited by harpin, S-nitrosoglutathione (GSNO), nitric oxide, N-ethylmaleimide and 5,5'-dithiobis-(2-nitrobenzoic acid). The glycine decarboxylase (GDC) or glycine cleavage system catalyzes the degradation of glycine. The P protein binds the alpha-amino group of glycine through its pyridoxal phosphate cofactor; CO(2) is released and the remaining methylamine moiety is then transferred to the lipoamide cofactor of the H protein. The polypeptide is Glycine dehydrogenase (decarboxylating) 1, mitochondrial (GLDP1) (Arabidopsis thaliana (Mouse-ear cress)).